A 492-amino-acid polypeptide reads, in one-letter code: Cytochrome P450 26A1 (492 aa).

Cys-437 is a binding site for heme.

This sequence belongs to the cytochrome P450 family. Heme serves as cofactor.

Its subcellular location is the endoplasmic reticulum membrane. It localises to the microsome membrane. It carries out the reaction all-trans-retinoate + reduced [NADPH--hemoprotein reductase] + O2 = all-trans-(4S)-hydroxyretinoate + oxidized [NADPH--hemoprotein reductase] + H2O + H(+). It catalyses the reaction all-trans-(4S)-hydroxyretinoate + reduced [NADPH--hemoprotein reductase] + O2 = all-trans-(4S,16)-dihydroxyretinoate + oxidized [NADPH--hemoprotein reductase] + H2O + H(+). The enzyme catalyses all-trans-retinoate + reduced [NADPH--hemoprotein reductase] + O2 = all-trans-18-hydroxyretinoate + oxidized [NADPH--hemoprotein reductase] + H2O + H(+). Functionally, a cytochrome P450 monooxygenase involved in the metabolism of retinoates (RAs), the active metabolites of vitamin A, and critical signaling molecules in animals. RAs exist as at least four different isomers: all-trans-RA (atRA), 9-cis-RA, 13-cis-RA, and 9,13-dicis-RA, where atRA is considered to be the biologically active isomer, although 9-cis-RA and 13-cis-RA also have activity. Catalyzes the hydroxylation of atRA primarily at C-4 and C-18, thereby contributing to the regulation of atRA homeostasis and signaling. Hydroxylation of atRA limits its biological activity and initiates a degradative process leading to its eventual elimination. Involved in the convertion of atRA to all-trans-4-oxo-RA. Able to metabolize other RAs such as 9-cis, 13-cis and 9,13-di-cis RA. Can oxidize all-trans-13,14-dihydroretinoate (DRA) to metabolites which could include all-trans-4-oxo-DRA, all-trans-4-hydroxy-DRA, all-trans-5,8-epoxy-DRA, and all-trans-18-hydroxy-DRA. May play a role in the oxidative metabolism of xenobiotics such as tazarotenic acid. The sequence is that of Cytochrome P450 26A1 (CYP26A1) from Gallus gallus (Chicken).